We begin with the raw amino-acid sequence, 573 residues long: Peptidyl-prolyl cis-trans isomerase-like 2 (573 aa).

One can recognise a U-box domain in the interval 37–119 (QRLPFDCCAL…GNLHDPITYK (83 aa)). Positions 223 to 247 (KNKSGQSPAPTPSKIDDGKGQEKKE) are disordered. Residues 236–247 (KIDDGKGQEKKE) show a composition bias toward basic and acidic residues. Residues 312–469 (SKAYATITTN…RDIVIQGVTV (158 aa)) form the PPIase cyclophilin-type domain. The span at 489-510 (DQSDAALKRRAEAQKEREKDRT) shows a compositional bias: basic and acidic residues. Positions 489 to 515 (DQSDAALKRRAEAQKEREKDRTTWLGT) are disordered.

It belongs to the cyclophilin-type PPIase family. PPIL2 subfamily.

The protein localises to the nucleus. The enzyme catalyses [protein]-peptidylproline (omega=180) = [protein]-peptidylproline (omega=0). The catalysed reaction is S-ubiquitinyl-[E2 ubiquitin-conjugating enzyme]-L-cysteine + [acceptor protein]-L-lysine = [E2 ubiquitin-conjugating enzyme]-L-cysteine + N(6)-ubiquitinyl-[acceptor protein]-L-lysine.. The protein operates within protein modification; protein ubiquitination. May catalyze the cis-trans isomerization of proline imidic peptide bonds in oligopeptides thereby assisting the folding of proteins. May also function as a chaperone, playing a role in intracellular transport of proteins. May also have a protein ubiquitin ligase activity acting as an E3 ubiquitin protein ligase or as a ubiquitin-ubiquitin ligase promoting elongation of ubiquitin chains on proteins. This Cryptococcus neoformans var. neoformans serotype D (strain B-3501A) (Filobasidiella neoformans) protein is Peptidyl-prolyl cis-trans isomerase-like 2 (CYP8).